We begin with the raw amino-acid sequence, 197 residues long: ATP-dependent Clp protease proteolytic subunit 3 (197 aa).

Ser-96 acts as the Nucleophile in catalysis. The active site involves His-121.

It belongs to the peptidase S14 family. Fourteen ClpP subunits assemble into 2 heptameric rings which stack back to back to give a disk-like structure with a central cavity, resembling the structure of eukaryotic proteasomes.

It is found in the cytoplasm. It carries out the reaction Hydrolysis of proteins to small peptides in the presence of ATP and magnesium. alpha-casein is the usual test substrate. In the absence of ATP, only oligopeptides shorter than five residues are hydrolyzed (such as succinyl-Leu-Tyr-|-NHMec, and Leu-Tyr-Leu-|-Tyr-Trp, in which cleavage of the -Tyr-|-Leu- and -Tyr-|-Trp bonds also occurs).. Its function is as follows. Cleaves peptides in various proteins in a process that requires ATP hydrolysis. Has a chymotrypsin-like activity. Plays a major role in the degradation of misfolded proteins. In Prochlorococcus marinus (strain MIT 9313), this protein is ATP-dependent Clp protease proteolytic subunit 3.